The following is an 88-amino-acid chain: Phosphocarrier protein HPr (88 aa).

One can recognise an HPr domain in the interval 1–88 (MEQQSYTIID…DVLSKEGLTE (88 aa)). Catalysis depends on histidine 15, which acts as the Pros-phosphohistidine intermediate. Residue serine 46 is modified to Phosphoserine; by HPrK/P.

It belongs to the HPr family.

The protein localises to the cytoplasm. With respect to regulation, phosphorylation on Ser-46 inhibits the phosphoryl transfer from enzyme I to HPr. Its function is as follows. General (non sugar-specific) component of the phosphoenolpyruvate-dependent sugar phosphotransferase system (sugar PTS). This major carbohydrate active-transport system catalyzes the phosphorylation of incoming sugar substrates concomitantly with their translocation across the cell membrane. The phosphoryl group from phosphoenolpyruvate (PEP) is transferred to the phosphoryl carrier protein HPr by enzyme I. Phospho-HPr then transfers it to the PTS EIIA domain. Functionally, P-Ser-HPr interacts with the catabolite control protein A (CcpA), forming a complex that binds to DNA at the catabolite response elements cre, operator sites preceding a large number of catabolite-regulated genes. Thus, P-Ser-HPr is a corepressor in carbon catabolite repression (CCR), a mechanism that allows bacteria to coordinate and optimize the utilization of available carbon sources. P-Ser-HPr also plays a role in inducer exclusion, in which it probably interacts with several non-PTS permeases and inhibits their transport activity. This Staphylococcus carnosus protein is Phosphocarrier protein HPr (ptsH).